Reading from the N-terminus, the 513-residue chain is Cytochrome P450 monooxygenase ARMGADRAFT_1018418 (513 aa).

The chain crosses the membrane as a helical span at residues 1 to 21 (MTHASSAWFLAAVVIVTFIVV). Cysteine 435 serves as a coordination point for heme. Asparagine 442 is a glycosylation site (N-linked (GlcNAc...) asparagine).

Belongs to the cytochrome P450 family. Requires heme as cofactor.

It is found in the membrane. Its pathway is secondary metabolite biosynthesis. Cytochrome P450 monooxygenase, part of the gene cluster that mediates the biosynthesis of melleolides, a range of antifungal and phytotoxic polyketide derivatives composed of an orsellinic acid (OA) moiety esterified to various sesquiterpene alcohols. The first step in melleolides biosynthesis is performed by the delta(6)-protoilludene synthase PRO1 which catalyzes the cyclization of farnesyl diphosphate to protoilludene. The orsellinic acid synthase armB produces OA by condensing acetyl-CoA with 3 malonyl-CoA units in a three-round chain elongation reaction folowed by a C2-C7 ring closure. ArmB further catalyzes the trans-esterification of OA to the various sesquiterpene alcohols resulting from the hydroxylation of protoilludene. The melleolides cluster also includes 5 cytochrome P450 monooxygenases, 4 NAD(+)-dependent oxidoreductases, one flavin-dependent oxidoreductase, and one O-methyltransferase. The cytochrome P450 monooxygenases may be involved in protoilludene hydroxylation to elaborate melleolides with multiple alcohol groups, such as melleolide D, which carries alcohol functionalities at C-4, C-5, C-10, and C-13. The role of the NAD(+)-dependent enzymes remains unknown. Numerous melleolides, including arnamial, show 5'-O-methylation of the aromatic moiety which may be catalyzed by the methyltransferase encoded in the cluster. The flavin-dependent oxidoreductase might represent the dehydrogenase yielding the aldehyde in position 1 of arnamial and other melleolides. Finally, several halogenase localized outside of the cluster, are able to catalyze the transfer of a single chlorine atom to the melleolide backbone, resulting in a 6'-chloromelleolide product. This chain is Cytochrome P450 monooxygenase ARMGADRAFT_1018418, found in Armillaria gallica (Bulbous honey fungus).